Here is a 460-residue protein sequence, read N- to C-terminus: Kynureninase (460 aa).

Pyridoxal 5'-phosphate is bound by residues Leu116, Thr117, 144 to 147 (FPSD), Ser199, Asp228, His231, and Tyr253. Lys254 is modified (N6-(pyridoxal phosphate)lysine). 2 residues coordinate pyridoxal 5'-phosphate: Trp288 and Asn316.

The protein belongs to the kynureninase family. In terms of assembly, homodimer. It depends on pyridoxal 5'-phosphate as a cofactor.

Its subcellular location is the cytoplasm. The catalysed reaction is L-kynurenine + H2O = anthranilate + L-alanine + H(+). The enzyme catalyses 3-hydroxy-L-kynurenine + H2O = 3-hydroxyanthranilate + L-alanine + H(+). Its pathway is amino-acid degradation; L-kynurenine degradation; L-alanine and anthranilate from L-kynurenine: step 1/1. The protein operates within cofactor biosynthesis; NAD(+) biosynthesis; quinolinate from L-kynurenine: step 2/3. Its function is as follows. Catalyzes the cleavage of L-kynurenine (L-Kyn) and L-3-hydroxykynurenine (L-3OHKyn) into anthranilic acid (AA) and 3-hydroxyanthranilic acid (3-OHAA), respectively. The sequence is that of Kynureninase from Debaryomyces hansenii (strain ATCC 36239 / CBS 767 / BCRC 21394 / JCM 1990 / NBRC 0083 / IGC 2968) (Yeast).